Reading from the N-terminus, the 384-residue chain is Intraflagellar transport protein 46 homolog (384 aa).

Disordered regions lie at residues 52 to 151 and 358 to 384; these read VNAE…PADY and SATD…LTLD. Over residues 87–99 the composition is skewed to basic and acidic residues; sequence EKLEEDTKRKKEP. The span at 110-138 shows a compositional bias: acidic residues; sequence DEEEDEDDDDDDDDDDSDDTESDEEEEEP. Residues 358-374 are compositionally biased toward polar residues; that stretch reads SATDGQKSDTPPASRSA.

It belongs to the IFT46 family.

It localises to the cytoplasm. The protein resides in the cytoskeleton. The protein localises to the cilium basal body. Its subcellular location is the cell projection. It is found in the cilium. Its function is as follows. Forms part of a complex involved in intraflagellar transport (IFT), the bi-directional movement of particles required for the assembly, maintenance and functioning of primary cilia. Plays a role in early embryonic development. The protein is Intraflagellar transport protein 46 homolog of Danio rerio (Zebrafish).